We begin with the raw amino-acid sequence, 877 residues long: Putative leucine-rich repeat receptor-like serine/threonine-protein kinase At2g19230 (877 aa).

The first 24 residues, 1–24, serve as a signal peptide directing secretion; the sequence is MGNFNFLPLVSFASFVVVLVLVCA. Residues 25 to 517 are Extracellular-facing; it reads QDQSGFVSID…RNKKTERKEY (493 aa). Residues N142, N233, N261, N295, N405, and N420 are each glycosylated (N-linked (GlcNAc...) asparagine). LRR repeat units follow at residues 439–462 and 463–484; these read PLQK…ANLP and DLTE…KLLE. The chain crosses the membrane as a helical span at residues 518 to 538; that stretch reads IIPSVASVTGLFFLLLALISF. The Cytoplasmic portion of the chain corresponds to 539 to 877; sequence WQFKKRQQSV…VDPGVLPQPR (339 aa). The Protein kinase domain occupies 569–842; sequence NNFERVLGQG…QVVAELKESL (274 aa). ATP-binding positions include 575–583 and K596; that span reads LGQGGFGKV. Y641 is modified (phosphotyrosine). The active-site Proton acceptor is the D692. S726 carries the phosphoserine modification. A phosphothreonine mark is found at T727 and T732.

Belongs to the protein kinase superfamily. Ser/Thr protein kinase family.

It localises to the cell membrane. It catalyses the reaction L-seryl-[protein] + ATP = O-phospho-L-seryl-[protein] + ADP + H(+). It carries out the reaction L-threonyl-[protein] + ATP = O-phospho-L-threonyl-[protein] + ADP + H(+). The chain is Putative leucine-rich repeat receptor-like serine/threonine-protein kinase At2g19230 from Arabidopsis thaliana (Mouse-ear cress).